The chain runs to 325 residues: RepFIB replication protein A (325 aa).

The interval 279-298 (APNDESKENPLPPSPAEKVS) is disordered.

The protein belongs to the initiator RepB protein family.

Functionally, this protein is essential for plasmid replication; it is involved in copy control functions. In vitro, binds to the DNA repeat units, BCDD'D'', EFG and HIJ. The protein is RepFIB replication protein A (repB) of Escherichia coli (strain K12).